The primary structure comprises 311 residues: Probable manganese-dependent inorganic pyrophosphatase (311 aa).

Positions 9, 13, 15, 75, 97, and 149 each coordinate Mn(2+).

The protein belongs to the PPase class C family. Mn(2+) is required as a cofactor.

It is found in the cytoplasm. The enzyme catalyses diphosphate + H2O = 2 phosphate + H(+). This Lactobacillus helveticus (strain DPC 4571) protein is Probable manganese-dependent inorganic pyrophosphatase.